Here is a 205-residue protein sequence, read N- to C-terminus: Putative epidermin response regulator (205 aa).

A DNA-binding region (ompR/PhoB-type) is located at residues 103–200 (KYIKYVNDDF…ERKLGYKILI (98 aa)).

It to the C-terminus of E.coli phosphate regulon transcriptional regulatory protein PhoB.

This chain is Putative epidermin response regulator (epiQ), found in Staphylococcus epidermidis.